A 109-amino-acid polypeptide reads, in one-letter code: Homeobox protein E60 (109 aa).

The disordered stretch occupies residues 1–31; that stretch reads PRTRRVKRSDGRGNGGTPEEKRPRTAFSGEQ. The homeobox DNA-binding region spans 20–79; that stretch reads EKRPRTAFSGEQLARLKREFAENRYLTERRRQQLSRDLGLNEAQIKIWFQNKRAKIKKAS.

It belongs to the engrailed homeobox family.

The protein localises to the nucleus. In Apis mellifera (Honeybee), this protein is Homeobox protein E60.